Consider the following 674-residue polypeptide: Enzymatic polyprotein (674 aa).

Residues 40–130 (IELHCFVDTG…CQLYEPFIQF (91 aa)) are protease. D47 is an active-site residue. The Reverse transcriptase domain maps to 267-447 (LKVIKPSKSP…KKINFLGLEI (181 aa)).

This sequence belongs to the caulimoviridae enzymatic polyprotein family.

The enzyme catalyses DNA(n) + a 2'-deoxyribonucleoside 5'-triphosphate = DNA(n+1) + diphosphate. In terms of biological role, encodes for at least two polypeptides: protease (PR) and reverse transcriptase (RT). The protease processes the polyprotein in cis. Reverse transcriptase is multifunctional enzyme that converts the viral RNA genome into dsDNA in viral cytoplasmic capsids. This enzyme displays a DNA polymerase activity that can copy either DNA or RNA templates, and a ribonuclease H (RNase H) activity that cleaves the RNA strand of RNA-DNA heteroduplexes in a partially processive 3'- to 5'-endonucleasic mode. Neo-synthesized pregenomic RNA (pgRNA) are encapsidated, and reverse-transcribed inside the nucleocapsid. Partial (+)DNA is synthesized from the (-)DNA template and generates the relaxed circular DNA (RC-DNA) genome. After budding and infection, the RC-DNA migrates in the nucleus, and is converted into a plasmid-like covalently closed circular DNA (cccDNA). The sequence is that of Enzymatic polyprotein from Arabidopsis thaliana (Mouse-ear cress).